The following is a 263-amino-acid chain: HTH-type transcriptional repressor NanR (263 aa).

A disordered region spans residues Met-1 to Asn-21. The HTH gntR-type domain occupies Lys-30–Pro-98. The segment at residues Glu-58 to Ala-77 is a DNA-binding region (H-T-H motif).

The protein belongs to the NanR family.

Transcriptional repressor that controls expression of the genes required for the catabolism of sialic acids. The polypeptide is HTH-type transcriptional repressor NanR (Escherichia coli O7:K1 (strain IAI39 / ExPEC)).